Consider the following 1651-residue polypeptide: Roundabout homolog 1 (1651 aa).

The first 25 residues, 1–25 (MKWKHLPLLVMISLLTLSKKHLLLA), serve as a signal peptide directing secretion. The Extracellular segment spans residues 26-897 (QLIPDPEDLE…QQISDVVKQP (872 aa)). The disordered stretch occupies residues 31 to 66 (PEDLERGNDNGTPAPTSDNDDNSLGYTGSRLRQEDF). The span at 39 to 56 (DNGTPAPTSDNDDNSLGY) shows a compositional bias: polar residues. Ig-like C2-type domains are found at residues 68–164 (PRIV…ASLE), 170–257 (DDFR…ADVT), 262–346 (PSFV…ATLT), 351–446 (PHFV…LEVT), and 455–541 (PVIR…AYIE). Residues cysteine 89 and cysteine 147 are joined by a disulfide bond. N-linked (GlcNAc...) asparagine glycosylation occurs at asparagine 160. 3 disulfides stabilise this stretch: cysteine 191–cysteine 240, cysteine 283–cysteine 330, and cysteine 372–cysteine 428. N-linked (GlcNAc...) asparagine glycosylation is present at asparagine 463. Cysteines 476 and 525 form a disulfide. Fibronectin type-III domains lie at 563 to 657 (APSK…TQDV), 676 to 773 (VVLH…TLEE), and 778 to 874 (PPRS…LDSH). Residues asparagine 790, asparagine 820, and asparagine 827 are each glycosylated (N-linked (GlcNAc...) asparagine). A helical membrane pass occupies residues 898-918 (AFIAGIGAACWIILMVFSIWL). Over 919 to 1651 (YRHRKKRNGL…NNEELEETES (733 aa)) the chain is Cytoplasmic. The residue at position 940 (serine 940) is a Phosphoserine. Threonine 948 bears the Phosphothreonine mark. A Phosphotyrosine modification is found at tyrosine 1038. Serine 1055 is subject to Phosphoserine. Position 1073 is a phosphotyrosine (tyrosine 1073). The interval 1086-1107 (NMNNGGGDSSEKHWKPPGQQKQ) is disordered. Tyrosine 1114 bears the Phosphotyrosine mark. 3 disordered regions span residues 1137 to 1337 (PYNH…ADME), 1352 to 1397 (EQTP…DGSF), and 1420 to 1651 (RRQM…ETES). Over residues 1147-1163 (GGSYNSSDRGSSTSGSQ) the composition is skewed to low complexity. Residues 1186 to 1196 (LPPPPAHPPPH) are compositionally biased toward pro residues. Threonine 1240 is subject to Phosphothreonine. Residues 1255 to 1269 (YSHQSTATLTPSPQE) show a composition bias toward polar residues. The span at 1281 to 1293 (DLGHMPHPPDRRR) shows a compositional bias: basic and acidic residues. Residues 1296-1307 (VSPPPPPRPISP) are compositionally biased toward pro residues. At serine 1297 the chain carries Phosphoserine. The span at 1322–1336 (MDTDAPEEEEDEADM) shows a compositional bias: acidic residues. The segment covering 1384 to 1397 (SSGRSSVSSSDGSF) has biased composition (low complexity). Over residues 1438–1451 (PRPTSPVSTDSNMS) the composition is skewed to polar residues. Over residues 1459–1470 (RPTKKQKHQPGH) the composition is skewed to basic residues. Residues 1480–1490 (LPPPPVPPPAI) are compositionally biased toward pro residues. 2 stretches are compositionally biased toward basic and acidic residues: residues 1516 to 1541 (ARADRSSDRKGGSYKGREALDGRQVT) and 1549 to 1573 (DPREAQEQPNEGKARGTKTAKRDLP). A compositionally biased stretch (polar residues) spans 1592–1601 (FPTSNNPRDP). Over residues 1602 to 1614 (SSSSSMSSRGSGS) the composition is skewed to low complexity. A compositionally biased stretch (acidic residues) spans 1642-1651 (NNEELEETES).

This sequence belongs to the immunoglobulin superfamily. ROBO family. Homodimer. Dimerization is mediated by the extracellular domain and is independent of SLIT liganding. Interacts with SLIT1. Interacts with SLIT2. Interacts with FLRT3. Interacts with MYO9B (via Rho-GAP domain). Post-translationally, ubiquitinated. May be deubiquitinated by USP33. Expressed in embryonal brain and spinal cord.

The protein localises to the cell membrane. Its subcellular location is the cell projection. It localises to the axon. It is found in the endoplasmic reticulum-Golgi intermediate compartment membrane. Receptor for SLIT1 and SLIT2 that mediates cellular responses to molecular guidance cues in cellular migration, including axonal navigation at the ventral midline of the neural tube and projection of axons to different regions during neuronal development. Interaction with the intracellular domain of FLRT3 mediates axon attraction towards cells expressing NTN1. In axon growth cones, the silencing of the attractive effect of NTN1 by SLIT2 may require the formation of a ROBO1-DCC complex. Plays a role in the regulation of cell migration via its interaction with MYO9B; inhibits MYO9B-mediated stimulation of RHOA GTPase activity, and thereby leads to increased levels of active, GTP-bound RHOA. May be required for lung development. This Rattus norvegicus (Rat) protein is Roundabout homolog 1 (Robo1).